The sequence spans 205 residues: Anaerobic dimethyl sulfoxide reductase chain B (205 aa).

3 4Fe-4S ferredoxin-type domains span residues 5 to 33 (YGFF…LTPE), 59 to 89 (FAYY…KRED), and 90 to 119 (GFVV…YNET). The [4Fe-4S] cluster site is built by cysteine 14, cysteine 17, cysteine 20, cysteine 24, cysteine 67, cysteine 70, cysteine 75, cysteine 79, cysteine 99, cysteine 102, cysteine 105, cysteine 109, cysteine 126, cysteine 129, cysteine 141, and cysteine 145. Residues 184–205 (KPNANSRPTGDTTGYLANPKEV) are disordered. Over residues 186–195 (NANSRPTGDT) the composition is skewed to polar residues.

Heterotrimeric enzyme composed of a catalytic heterodimer (DmsAB) and a membrane anchor protein (DmsC). The cofactor is [4Fe-4S] cluster.

Functionally, electron transfer subunit of the terminal reductase during anaerobic growth on various sulfoxide and N-oxide compounds. The sequence is that of Anaerobic dimethyl sulfoxide reductase chain B (dmsB) from Escherichia coli (strain K12).